A 477-amino-acid polypeptide reads, in one-letter code: tRNA-2-methylthio-N(6)-dimethylallyladenosine synthase (477 aa).

In terms of domain architecture, MTTase N-terminal spans 13-130; it reads GGLFIKTYGC…LPAMIEEALA (118 aa). Residues C22, C59, C93, C178, C182, and C185 each contribute to the [4Fe-4S] cluster site. In terms of domain architecture, Radical SAM core spans 164–396; it reads ESNGVSAFVS…QAMLNEQTAA (233 aa). Residues 399–462 form the TRAM domain; the sequence is EGMVGTTQRV…ANSLKGKLVA (64 aa).

This sequence belongs to the methylthiotransferase family. MiaB subfamily. Monomer. [4Fe-4S] cluster is required as a cofactor.

It localises to the cytoplasm. It carries out the reaction N(6)-dimethylallyladenosine(37) in tRNA + (sulfur carrier)-SH + AH2 + 2 S-adenosyl-L-methionine = 2-methylsulfanyl-N(6)-dimethylallyladenosine(37) in tRNA + (sulfur carrier)-H + 5'-deoxyadenosine + L-methionine + A + S-adenosyl-L-homocysteine + 2 H(+). In terms of biological role, catalyzes the methylthiolation of N6-(dimethylallyl)adenosine (i(6)A), leading to the formation of 2-methylthio-N6-(dimethylallyl)adenosine (ms(2)i(6)A) at position 37 in tRNAs that read codons beginning with uridine. This is tRNA-2-methylthio-N(6)-dimethylallyladenosine synthase from Hydrogenovibrio crunogenus (strain DSM 25203 / XCL-2) (Thiomicrospira crunogena).